We begin with the raw amino-acid sequence, 85 residues long: RNA-binding protein Hfq (85 aa).

Residues 9-68 enclose the Sm domain; the sequence is DPFLNALRRERVPVSIYLVNGIKLQGQVESFDQFVILLKNTVSQMVYKHAISTVVPARPF.

This sequence belongs to the Hfq family. As to quaternary structure, homohexamer.

RNA chaperone that binds small regulatory RNA (sRNAs) and mRNAs to facilitate mRNA translational regulation in response to envelope stress, environmental stress and changes in metabolite concentrations. Also binds with high specificity to tRNAs. The polypeptide is RNA-binding protein Hfq (Shewanella frigidimarina (strain NCIMB 400)).